A 156-amino-acid chain; its full sequence is Cell division protein SepF (156 aa).

Residues 17–44 (PETADYYEDQQPAQQAPAPVPTPAPTRS) form a disordered region.

Belongs to the SepF family. In terms of assembly, homodimer. Interacts with FtsZ.

It is found in the cytoplasm. In terms of biological role, cell division protein that is part of the divisome complex and is recruited early to the Z-ring. Probably stimulates Z-ring formation, perhaps through the cross-linking of FtsZ protofilaments. Its function overlaps with FtsA. The polypeptide is Cell division protein SepF (Limosilactobacillus fermentum (strain NBRC 3956 / LMG 18251) (Lactobacillus fermentum)).